Consider the following 214-residue polypeptide: Adenylate kinase (214 aa).

ATP is bound at residue 10-15; that stretch reads GAGKGT. The NMP stretch occupies residues 30-59; that stretch reads STGDMLRAAIKAGTELGLNAKAVMDAGQLV. AMP-binding positions include Thr31, Arg36, 57–59, 85–88, and Gln92; these read QLV and GFPR. The LID stretch occupies residues 122-159; that stretch reads GRRVHSGSGRTYHVVFNPPKVEGKDDVTGEDLVIRADD. Residues Arg123 and 132–133 each bind ATP; that span reads TY. Positions 156 and 167 each coordinate AMP. Gln200 contributes to the ATP binding site.

Belongs to the adenylate kinase family. As to quaternary structure, monomer.

It localises to the cytoplasm. It carries out the reaction AMP + ATP = 2 ADP. The protein operates within purine metabolism; AMP biosynthesis via salvage pathway; AMP from ADP: step 1/1. Catalyzes the reversible transfer of the terminal phosphate group between ATP and AMP. Plays an important role in cellular energy homeostasis and in adenine nucleotide metabolism. The sequence is that of Adenylate kinase from Aeromonas salmonicida (strain A449).